Here is a 555-residue protein sequence, read N- to C-terminus: AP2-like ethylene-responsive transcription factor ANT (555 aa).

2 disordered regions span residues 34 to 56 and 199 to 231; these read GGRE…SVPP and LSMS…NHQQ. Composition is skewed to low complexity over residues 41 to 53, 199 to 208, and 218 to 231; these read SSST…SSSS, LSMSPGSQSS, and QNQN…NHQQ. 2 consecutive DNA-binding regions (AP2/ERF) follow at residues 283–349 and 385–443; these read QYRG…TNFS and IYRG…TNFD.

It belongs to the AP2/ERF transcription factor family. AP2 subfamily. In terms of assembly, interacts with ANL2, HDG2 and HDG10, and possibly with GL2, HDG3, HDG8, ATML1 and PDF2. Mostly expressed in developing flowers. Also present in mature flowers, siliques and seedlings, but not in mature roots, leaves and stems. Expressed in ovules and in vegetative and floral primordia.

The protein localises to the nucleus. Functionally, transcription activator that recognizes and binds to the DNA consensus sequence 5'-CAC[AG]N[AT]TNCCNANG-3'. Required for the initiation and growth of ovules integumenta, and for the development of female gametophyte. Plays a critical role in the development of gynoecium marginal tissues (e.g. stigma, style and septa), and in the fusion of carpels and of medial ridges leading to ovule primordia. Also involved in organs initiation and development, including floral organs. Maintains the meristematic competence of cells and consequently sustains expression of cell cycle regulators during organogenesis, thus controlling the final size of each organ by controlling their cell number. Regulates INO autoinduction and expression pattern. As ANT promotes petal cell identity and mediates down-regulation of AG in flower whorl 2, it functions as a class A homeotic gene. The polypeptide is AP2-like ethylene-responsive transcription factor ANT (Arabidopsis thaliana (Mouse-ear cress)).